The sequence spans 520 residues: Laccase-1 (520 aa).

Positions 1 to 21 (MSRFHSLLAFVVASLTAVAHA) are cleaved as a signal peptide. 2 Plastocyanin-like domains span residues 23–148 (IGPV…FVVY) and 160–302 (VDND…ILRY). 2 N-linked (GlcNAc...) asparagine glycosylation sites follow: Asn72 and Asn75. Residues His85, His87, His130, and His132 each contribute to the Cu cation site. 2 cysteine pairs are disulfide-bonded: Cys106-Cys509 and Cys138-Cys226. N-linked (GlcNAc...) asparagine glycosylation is found at Asn229, Asn238, Asn354, and Asn361. The region spanning 369–491 (TVPVLLQIIS…AGFAVVFAED (123 aa)) is the Plastocyanin-like 3 domain. Residues His416, His419, His421, His473, Cys474, His475, and His479 each contribute to the Cu cation site.

This sequence belongs to the multicopper oxidase family. Homodimer. Cu cation is required as a cofactor.

It localises to the secreted. The enzyme catalyses 4 hydroquinone + O2 = 4 benzosemiquinone + 2 H2O. Its function is as follows. Lignin degradation and detoxification of lignin-derived products. This chain is Laccase-1, found in Trametes villosa (White-rot fungus).